The primary structure comprises 107 residues: Pro-corazonin (107 aa).

Positions 1–21 (MVNSQILILFILSLTITIVMC) are cleaved as a signal peptide. At Q22 the chain carries Pyrrolidone carboxylic acid. N32 carries the post-translational modification Asparagine amide. A propeptide spanning residues 88–107 (SFSENMINDHRQPAPTNNNY) is cleaved from the precursor.

Belongs to the corazonin family. As to expression, in the adult brain, expressed in four neurons of the lateral protocerebrum project axons towards the retrocerebral complex.

Its subcellular location is the secreted. Cardioactive peptide. Corazonin is probably involved in the physiological regulation of the heart beat. The sequence is that of Pro-corazonin from Apis mellifera (Honeybee).